The chain runs to 189 residues: MPTYKLIVGLGNLGKKYEKTRHNAGFMVLDRLASLFHLNFDKTNKLGDYLFIKEKAAILAKPATFMNNSGLFVKWLQDHFQIPLANIMIVHDEIAFDLGVIRLKMQGSANNHNGIKSVIRHLDTEQFNRLRFGIKSQNTSNILHEQVMSEFQNSELTKLEVAITKSVELLKRYIEGEELQRLMEYYHHG.

Tyrosine 17 is a binding site for tRNA. The active-site Proton acceptor is histidine 22. The tRNA site is built by phenylalanine 65, asparagine 67, and asparagine 113.

The protein belongs to the PTH family. In terms of assembly, monomer.

Its subcellular location is the cytoplasm. It catalyses the reaction an N-acyl-L-alpha-aminoacyl-tRNA + H2O = an N-acyl-L-amino acid + a tRNA + H(+). Its function is as follows. Hydrolyzes ribosome-free peptidyl-tRNAs (with 1 or more amino acids incorporated), which drop off the ribosome during protein synthesis, or as a result of ribosome stalling. Catalyzes the release of premature peptidyl moieties from peptidyl-tRNA molecules trapped in stalled 50S ribosomal subunits, and thus maintains levels of free tRNAs and 50S ribosomes. The polypeptide is Peptidyl-tRNA hydrolase (Mycoplasma genitalium (strain ATCC 33530 / DSM 19775 / NCTC 10195 / G37) (Mycoplasmoides genitalium)).